The primary structure comprises 212 residues: MNNNNSFNFIDSQYSTPQGAYYDNTGRMGGGGGMGGPTDSFDNELPLLEELGINFDHIRSKTLSVLNPLKKIDSHIMDDTDLGGPILFGLLLGFSLLMSGKIQFGYIYGLGLIGCVSMYIVLNLMSEKGIDIYRVISVLGYCLLPMIFLSFTSLIININGMVGYILIGFAIVWSTYSASKMFVKVLSMIDQRILVAYPVGLLYTGFALITAF.

The Cytoplasmic portion of the chain corresponds to M1–D79. The chain crosses the membrane as a helical span at residues T80–G100. Position 101 (K101) is a topological domain, lumenal. Residues I102–L122 form a helical membrane-spanning segment. The Cytoplasmic segment spans residues N123–K128. Residues G129–L149 traverse the membrane as a helical segment. Residues S150–G163 lie on the Lumenal side of the membrane. Residues Y164–L186 traverse the membrane as a helical segment. The Cytoplasmic segment spans residues S187–Q191. Residues R192–F212 form a helical membrane-spanning segment.

The protein belongs to the YIP1 family.

It localises to the endoplasmic reticulum membrane. The protein resides in the golgi apparatus. It is found in the cis-Golgi network membrane. Plays a role in transport between endoplasmic reticulum and Golgi. The chain is Protein YIPF5 homolog (yipf5) from Dictyostelium discoideum (Social amoeba).